We begin with the raw amino-acid sequence, 77 residues long: Acyl carrier protein (77 aa).

One can recognise a Carrier domain in the interval 2–77 (SDVAERVKKI…DAIDFITANS (76 aa)). At Ser-37 the chain carries O-(pantetheine 4'-phosphoryl)serine.

It belongs to the acyl carrier protein (ACP) family. Post-translationally, 4'-phosphopantetheine is transferred from CoA to a specific serine of apo-ACP by AcpS. This modification is essential for activity because fatty acids are bound in thioester linkage to the sulfhydryl of the prosthetic group.

It localises to the cytoplasm. The protein operates within lipid metabolism; fatty acid biosynthesis. In terms of biological role, carrier of the growing fatty acid chain in fatty acid biosynthesis. The chain is Acyl carrier protein from Paramagnetospirillum magneticum (strain ATCC 700264 / AMB-1) (Magnetospirillum magneticum).